Consider the following 395-residue polypeptide: Homoserine O-acetyltransferase (395 aa).

The AB hydrolase-1 domain occupies 65-363 (PIVLIEHALT…SPTGHDGFLI (299 aa)). Catalysis depends on Ser160, which acts as the Nucleophile. Residue Arg230 coordinates substrate. Residues Asp328 and His358 contribute to the active site. Asp359 provides a ligand contact to substrate.

It belongs to the AB hydrolase superfamily. MetX family. In terms of assembly, homodimer.

It localises to the cytoplasm. It carries out the reaction L-homoserine + acetyl-CoA = O-acetyl-L-homoserine + CoA. It functions in the pathway amino-acid biosynthesis; L-methionine biosynthesis via de novo pathway; O-acetyl-L-homoserine from L-homoserine: step 1/1. In terms of biological role, transfers an acetyl group from acetyl-CoA to L-homoserine, forming acetyl-L-homoserine. This chain is Homoserine O-acetyltransferase, found in Corynebacterium jeikeium (strain K411).